We begin with the raw amino-acid sequence, 124 residues long: Cytochrome c2 (124 aa).

At Gln-1 the chain carries Pyrrolidone carboxylic acid. 4 residues coordinate heme c: Cys-16, Cys-19, His-20, and Met-85.

It belongs to the cytochrome c family. Post-translationally, binds 1 heme c group covalently per subunit.

Its subcellular location is the periplasm. Cytochrome c2 is found mainly in purple, non-sulfur, photosynthetic bacteria where it functions as the electron donor to the oxidized bacteriochlorophyll in the photophosphorylation pathway. However, it may also have a role in the respiratory chain and is found in some non-photosynthetic bacteria. The polypeptide is Cytochrome c2 (Afifella marina (Rhodobium marinum)).